The primary structure comprises 149 residues: NADH-quinone oxidoreductase subunit A (149 aa).

The next 3 membrane-spanning stretches (helical) occupy residues F16–F36, F68–W88, and L98–V118.

This sequence belongs to the complex I subunit 3 family. In terms of assembly, NDH-1 is composed of 13 different subunits. Subunits NuoA, H, J, K, L, M, N constitute the membrane sector of the complex.

Its subcellular location is the cell inner membrane. It carries out the reaction a quinone + NADH + 5 H(+)(in) = a quinol + NAD(+) + 4 H(+)(out). NDH-1 shuttles electrons from NADH, via FMN and iron-sulfur (Fe-S) centers, to quinones in the respiratory chain. The immediate electron acceptor for the enzyme in this species is believed to be ubiquinone. Couples the redox reaction to proton translocation (for every two electrons transferred, four hydrogen ions are translocated across the cytoplasmic membrane), and thus conserves the redox energy in a proton gradient. The protein is NADH-quinone oxidoreductase subunit A of Photorhabdus laumondii subsp. laumondii (strain DSM 15139 / CIP 105565 / TT01) (Photorhabdus luminescens subsp. laumondii).